Consider the following 89-residue polypeptide: MALKVKLVKSFAGASSDMLDTIRGLGLKKFGDERLLKDTPAVRGMAFKVKHLVTLETVSGDAPAPKRRKPAKIALRERAIAYQAKQNKA.

This sequence belongs to the universal ribosomal protein uL30 family. Part of the 50S ribosomal subunit.

This is Large ribosomal subunit protein uL30 from Myxococcus xanthus (strain DK1622).